Here is a 241-residue protein sequence, read N- to C-terminus: 2-C-methyl-D-erythritol 4-phosphate cytidylyltransferase (241 aa).

It belongs to the IspD/TarI cytidylyltransferase family. IspD subfamily.

It carries out the reaction 2-C-methyl-D-erythritol 4-phosphate + CTP + H(+) = 4-CDP-2-C-methyl-D-erythritol + diphosphate. It participates in isoprenoid biosynthesis; isopentenyl diphosphate biosynthesis via DXP pathway; isopentenyl diphosphate from 1-deoxy-D-xylulose 5-phosphate: step 2/6. Its function is as follows. Catalyzes the formation of 4-diphosphocytidyl-2-C-methyl-D-erythritol from CTP and 2-C-methyl-D-erythritol 4-phosphate (MEP). This chain is 2-C-methyl-D-erythritol 4-phosphate cytidylyltransferase, found in Pseudoalteromonas translucida (strain TAC 125).